We begin with the raw amino-acid sequence, 177 residues long: MSELTTIARPYAKAAFDFAIEQSAVEKWTEMLGFAAAVAEDETVKAYLSSSLSAQKLADTVISICGEQLDQYGQNLIRLMAENKRLSAIPAVFEEFKHHVEEHQAIAEVEVTSAQPLNATQIEKIAAAMEKRLARKVKLNCNVDNALIAGVIVRTEDFVIDGSSRGQLTRLANELQL.

This sequence belongs to the ATPase delta chain family. In terms of assembly, F-type ATPases have 2 components, F(1) - the catalytic core - and F(0) - the membrane proton channel. F(1) has five subunits: alpha(3), beta(3), gamma(1), delta(1), epsilon(1). F(0) has three main subunits: a(1), b(2) and c(10-14). The alpha and beta chains form an alternating ring which encloses part of the gamma chain. F(1) is attached to F(0) by a central stalk formed by the gamma and epsilon chains, while a peripheral stalk is formed by the delta and b chains.

The protein resides in the cell inner membrane. Functionally, f(1)F(0) ATP synthase produces ATP from ADP in the presence of a proton or sodium gradient. F-type ATPases consist of two structural domains, F(1) containing the extramembraneous catalytic core and F(0) containing the membrane proton channel, linked together by a central stalk and a peripheral stalk. During catalysis, ATP synthesis in the catalytic domain of F(1) is coupled via a rotary mechanism of the central stalk subunits to proton translocation. This protein is part of the stalk that links CF(0) to CF(1). It either transmits conformational changes from CF(0) to CF(1) or is implicated in proton conduction. This is ATP synthase subunit delta from Haemophilus influenzae (strain PittGG).